We begin with the raw amino-acid sequence, 313 residues long: D-beta-D-heptose 7-phosphate kinase (313 aa).

Asn-196–Glu-199 contributes to the ATP binding site. The active site involves Asp-264.

It carries out the reaction D-glycero-beta-D-manno-heptose 7-phosphate + ATP = D-glycero-beta-D-manno-heptose 1,7-bisphosphate + ADP + H(+). It functions in the pathway nucleotide-sugar biosynthesis; ADP-L-glycero-beta-D-manno-heptose biosynthesis; ADP-L-glycero-beta-D-manno-heptose from D-glycero-beta-D-manno-heptose 7-phosphate: step 1/4. Its pathway is bacterial outer membrane biogenesis; LPS core biosynthesis. Functionally, catalyzes the phosphorylation of D-glycero-D-manno-heptose 7-phosphate at the C-1 position to selectively form D-glycero-beta-D-manno-heptose-1,7-bisphosphate. This Bordetella bronchiseptica (strain ATCC BAA-588 / NCTC 13252 / RB50) (Alcaligenes bronchisepticus) protein is D-beta-D-heptose 7-phosphate kinase (rfaE).